Consider the following 445-residue polypeptide: uncharacterized protein (445 aa).

This is an uncharacterized protein from Acanthamoeba polyphaga mimivirus (APMV).